We begin with the raw amino-acid sequence, 474 residues long: Probable diacyglycerol O-acyltransferase Tgs4 (474 aa).

His135 serves as the catalytic Proton acceptor.

It belongs to the long-chain O-acyltransferase family.

It catalyses the reaction an acyl-CoA + a 1,2-diacyl-sn-glycerol = a triacyl-sn-glycerol + CoA. It participates in glycerolipid metabolism; triacylglycerol biosynthesis. Required for maintaining the appropriate mycolic acid composition and permeability of the envelope on its exposure to acidic pH. The sequence is that of Probable diacyglycerol O-acyltransferase Tgs4 (tgs4) from Mycobacterium tuberculosis (strain CDC 1551 / Oshkosh).